The following is a 592-amino-acid chain: V-type ATP synthase alpha chain (592 aa).

Residue 232 to 239 (GPFGSGKT) coordinates ATP.

The protein belongs to the ATPase alpha/beta chains family.

The catalysed reaction is ATP + H2O + 4 H(+)(in) = ADP + phosphate + 5 H(+)(out). Produces ATP from ADP in the presence of a proton gradient across the membrane. The V-type alpha chain is a catalytic subunit. The chain is V-type ATP synthase alpha chain from Clostridioides difficile (strain 630) (Peptoclostridium difficile).